The primary structure comprises 67 residues: MARLKAPELRELDVEELERRLAETRRELFNLRFQHATGQLENTGQLREVRRNIARLLTVLNQKRQEK.

This sequence belongs to the universal ribosomal protein uL29 family.

The protein is Large ribosomal subunit protein uL29 of Rubrobacter xylanophilus (strain DSM 9941 / JCM 11954 / NBRC 16129 / PRD-1).